The sequence spans 1109 residues: MPKRTDLKSVLVIGSGPIVIGQAAEFDYSGTQALRVLKEEGLRVILVNSNPATIMTDPEFADATYIEPITPEVVEKIIAKERPDAVLPTLGGQTALNTAIALDKNGVLEKYNVELIGANIAAIELGEDREKFKGVVERCGAESARSHIIHTMDEALEAAKDLGYPMVVRPSFTMGGLGSGLAYNEDDLRRIVGQGLQYSPTSEVLLEESILGWKEYELEMMRDKNDNVVVVCSIENFDPVGVHTGDSITVAPALTLTDREYQKLRDVSIAVIREVGVDTGGCNIQFAIDPATGRVVVIEMNPRVSRSSALASKATGFAIAKIATKLSLGYTLDEIPNDITQKTPASFEPTLDYVVVKVPRFAFEKFPAADNTLTTTMKSVGEAMAMGRNFTEALQKALRSLEQKGSQLDFSSVPEYEVAELIEKAKRPTTDRLYQVQRALLGGATVEQLFEATKIDPWFLDQLELLNEVSREIRQAGALTTDMLQRAKRHGFSDEQIGALTHNSEAVVRGVRQALGIRPVYKTVDTCAAEFAAYTPYHYSAYDEEDEVALHSKPSILILGSGPNRIGQGIEFDYSCVHASMALRKAGYETVMVNCNPETVSTDYDVSTRLYFEPLTLEDVLEVIAAEERTGGVMGVFVQLGGQTPLKLAQQLADAGVPILGTSPEAIDLAEHRGAFSRVLDKAGLVSPKNGTAVSFEDAKKIADEIGYPVLVRPSYVLGGRGMEIVYDEPNLSRYIANATEITPDHPVLIDRFLEDAVEIDVDALFDGTDMYLGGIMEHIEEAGIHSGDSACVLPPITLGSNVVERVRTATRAIAEGVGVRGLINIQFALASDVLYVLEANPRASRTVPFVSKATGVQMAKAAALIGTGVTINQLRTAYKMLPETGDGSTLPLDAPVAVKEAVLPFSRFRTPEGKVVDSLLGPEMRSTGEVMGIDKHFDTAFAKSQAGANNALPTEGKVFVSVANRDKRSVIMGVKRLSDLGFEIVSTGGTADVLRRNGIAATPVRKVAEGSSAEGEGTIADLVVAGEIDMVFNTPSGGEARSDGYELRAAATSIGIPCITTVAEFNAAVQAIEAMRTYEWSVTSLQEHAAALGESQKAAAAKADLQHA.

A carboxyphosphate synthetic domain region spans residues 1 to 402; sequence MPKRTDLKSV…ALQKALRSLE (402 aa). Arginine 129, arginine 169, glycine 175, glycine 176, glutamate 208, isoleucine 210, glutamate 215, glycine 241, valine 242, histidine 243, glutamine 285, and glutamate 299 together coordinate ATP. The 196-residue stretch at 133-328 folds into the ATP-grasp 1 domain; it reads KGVVERCGAE…IAKIATKLSL (196 aa). Residues glutamine 285, glutamate 299, and asparagine 301 each coordinate Mg(2+). Residues glutamine 285, glutamate 299, and asparagine 301 each coordinate Mn(2+). The interval 403–546 is oligomerization domain; sequence QKGSQLDFSS…YHYSAYDEED (144 aa). The carbamoyl phosphate synthetic domain stretch occupies residues 547–950; that stretch reads EVALHSKPSI…AFAKSQAGAN (404 aa). The ATP-grasp 2 domain maps to 677–868; the sequence is SRVLDKAGLV…MAKAAALIGT (192 aa). Arginine 713, arginine 752, leucine 754, glutamate 759, glycine 784, isoleucine 785, histidine 786, serine 787, glutamine 827, and glutamate 839 together coordinate ATP. Residues glutamine 827, glutamate 839, and asparagine 841 each contribute to the Mg(2+) site. Mn(2+) contacts are provided by glutamine 827, glutamate 839, and asparagine 841. An MGS-like domain is found at 951–1096; sequence NALPTEGKVF…QEHAAALGES (146 aa). The segment at 951-1109 is allosteric domain; the sequence is NALPTEGKVF…AAAKADLQHA (159 aa).

Belongs to the CarB family. Composed of two chains; the small (or glutamine) chain promotes the hydrolysis of glutamine to ammonia, which is used by the large (or ammonia) chain to synthesize carbamoyl phosphate. Tetramer of heterodimers (alpha,beta)4. Requires Mg(2+) as cofactor. The cofactor is Mn(2+).

The enzyme catalyses hydrogencarbonate + L-glutamine + 2 ATP + H2O = carbamoyl phosphate + L-glutamate + 2 ADP + phosphate + 2 H(+). It carries out the reaction hydrogencarbonate + NH4(+) + 2 ATP = carbamoyl phosphate + 2 ADP + phosphate + 2 H(+). Its pathway is amino-acid biosynthesis; L-arginine biosynthesis; carbamoyl phosphate from bicarbonate: step 1/1. It functions in the pathway pyrimidine metabolism; UMP biosynthesis via de novo pathway; (S)-dihydroorotate from bicarbonate: step 1/3. In terms of biological role, large subunit of the glutamine-dependent carbamoyl phosphate synthetase (CPSase). CPSase catalyzes the formation of carbamoyl phosphate from the ammonia moiety of glutamine, carbonate, and phosphate donated by ATP, constituting the first step of 2 biosynthetic pathways, one leading to arginine and/or urea and the other to pyrimidine nucleotides. The large subunit (synthetase) binds the substrates ammonia (free or transferred from glutamine from the small subunit), hydrogencarbonate and ATP and carries out an ATP-coupled ligase reaction, activating hydrogencarbonate by forming carboxy phosphate which reacts with ammonia to form carbamoyl phosphate. The protein is Carbamoyl phosphate synthase large chain of Pseudarthrobacter chlorophenolicus (strain ATCC 700700 / DSM 12829 / CIP 107037 / JCM 12360 / KCTC 9906 / NCIMB 13794 / A6) (Arthrobacter chlorophenolicus).